The following is a 288-amino-acid chain: Tryptophan 2,3-dioxygenase (288 aa).

Substrate contacts are provided by residues 57–61 (FIIQH), Y119, and R123. Residue H246 participates in heme binding. T260 contacts substrate.

This sequence belongs to the tryptophan 2,3-dioxygenase family. As to quaternary structure, homotetramer. Heme serves as cofactor.

It carries out the reaction L-tryptophan + O2 = N-formyl-L-kynurenine. It functions in the pathway amino-acid degradation; L-tryptophan degradation via kynurenine pathway; L-kynurenine from L-tryptophan: step 1/2. Its function is as follows. Heme-dependent dioxygenase that catalyzes the oxidative cleavage of the L-tryptophan (L-Trp) pyrrole ring and converts L-tryptophan to N-formyl-L-kynurenine. Catalyzes the oxidative cleavage of the indole moiety. In Pseudomonas aeruginosa (strain ATCC 15692 / DSM 22644 / CIP 104116 / JCM 14847 / LMG 12228 / 1C / PRS 101 / PAO1), this protein is Tryptophan 2,3-dioxygenase.